Reading from the N-terminus, the 4116-residue chain is Dynein axonemal heavy chain 3 (4116 aa).

Disordered regions lie at residues 1–68 (MGAT…ANEE) and 137–172 (VPRD…KEDS). The interval 1-1390 (MGATGRLELT…QVQIITTEAL (1390 aa)) is stem. The span at 145–156 (GLPSSGNRSSSE) shows a compositional bias: polar residues. A coiled-coil region spans residues 785–852 (DLIKRCSEFE…NKEEELLEKE (68 aa)). AAA regions lie at residues 1391–1612 (YGYE…VLTA), 1672–1903 (KVLN…LHCK), 2036–2284 (KVPA…VIQG), and 2395–2646 (EFNN…LRRH). ATP-binding positions include 1429-1436 (GPAGTGKT), 1710-1717 (GDPMGGKT), 2074-2081 (GPTGTGKS), and 2434-2441 (GIGGSGRQ). A stalk region spans residues 2661 to 2960 (FKTLLNSKRQ…KDLEENIEIC (300 aa)). AAA regions lie at residues 3045-3275 (LGDP…EISE) and 3488-3712 (VREF…QIQM).

It belongs to the dynein heavy chain family. In terms of assembly, consists of at least two heavy chains and a number of intermediate and light chains. Expressed primarily in trachea and testis, 2 tissues containing axonemal structures. Also expressed in lung.

The protein localises to the cytoplasm. It localises to the cytoskeleton. The protein resides in the cilium axoneme. Its function is as follows. Force generating protein of respiratory cilia. Produces force towards the minus ends of microtubules. Dynein has ATPase activity; the force-producing power stroke is thought to occur on release of ADP. Involved in sperm motility; implicated in sperm flagellar assembly. The polypeptide is Dynein axonemal heavy chain 3 (DNAH3) (Homo sapiens (Human)).